The primary structure comprises 596 residues: Heat shock factor protein 5 (596 aa).

Residues 10–200 (NPNNFPAKLW…FHRSFRRDSL (191 aa)) mediate DNA binding. The interval 541–576 (EMGPASKPSEDTGLATPARYREHRSNSQQGKSPDLH) is disordered. Position 572 is a phosphoserine (Ser572).

The protein belongs to the HSF family. In terms of assembly, homooligomer.

It is found in the nucleus. It localises to the chromosome. DNA-binding transcription factor that is essential for male fertility, spermatogenesis and meiotic prophase progression in spermatocytes under non-stress conditions. Positvely and negatively regulates gene expression to ensure progression of meiotic prophase beyond pachytene stage in spermatocytes. Plays a role in male germline meiotic sex chromosome remodeling and silencing through regulation of SMARCA4. In Homo sapiens (Human), this protein is Heat shock factor protein 5 (HSF5).